Here is a 419-residue protein sequence, read N- to C-terminus: Isocitrate dehydrogenase [NADP] 1 (419 aa).

Thr105 is a binding site for NADP(+). 5 residues coordinate D-threo-isocitrate: Ser114, Asn116, Arg120, Arg130, and Arg154. Asp308 contacts Mg(2+). Residues 340–346 (HGTAPKY), Asn353, Tyr392, and Arg396 contribute to the NADP(+) site.

It belongs to the isocitrate and isopropylmalate dehydrogenases family. In terms of assembly, homodimer. The cofactor is Mg(2+). Mn(2+) is required as a cofactor.

The enzyme catalyses D-threo-isocitrate + NADP(+) = 2-oxoglutarate + CO2 + NADPH. With respect to regulation, IDH activity is not significantly affected by monovalent cations. The combined addition of Mn(2+) and another divalent cation results in the decrease of the activity. Functionally, catalyzes the oxidative decarboxylation of isocitrate to 2-oxoglutarate and carbon dioxide with the concomitant reduction of NADP(+). Cannot use NAD(+). In Psychrobacter sp. (strain 13A), this protein is Isocitrate dehydrogenase [NADP] 1.